We begin with the raw amino-acid sequence, 219 residues long: Ribose-5-phosphate isomerase A (219 aa).

Substrate contacts are provided by residues 28–31 (TGST), 81–84 (DGAD), and 94–97 (KGGG). Glu103 functions as the Proton acceptor in the catalytic mechanism. Residue Lys121 coordinates substrate.

The protein belongs to the ribose 5-phosphate isomerase family. Homodimer.

It carries out the reaction aldehydo-D-ribose 5-phosphate = D-ribulose 5-phosphate. It participates in carbohydrate degradation; pentose phosphate pathway; D-ribose 5-phosphate from D-ribulose 5-phosphate (non-oxidative stage): step 1/1. Catalyzes the reversible conversion of ribose-5-phosphate to ribulose 5-phosphate. In Escherichia fergusonii (strain ATCC 35469 / DSM 13698 / CCUG 18766 / IAM 14443 / JCM 21226 / LMG 7866 / NBRC 102419 / NCTC 12128 / CDC 0568-73), this protein is Ribose-5-phosphate isomerase A.